The following is a 295-amino-acid chain: Probable dTDP-4,6-dihydroxy-2-methyloxan-3-one 4-ketoreductase (295 aa).

NADH contacts are provided by residues 10-12 (GML), 36-37 (DV), 60-62 (AYT), Tyr-126, and Lys-130. Residues 11–12 (ML), 36–37 (DV), 60–62 (AYT), Tyr-126, and Lys-130 each bind NADPH. Tyr-126 acts as the Proton donor/acceptor in catalysis.

This sequence belongs to the dTDP-4-dehydrorhamnose reductase family. The cofactor is Mg(2+).

Its pathway is antibiotic biosynthesis. Its function is as follows. Involved in the biosynthesis of one of the two 2,6-deoxysugars, dTDP-L-oleandrose, attached to the macrolactone ring oleandolide to produce the aglycone antibiotic oleandomycin. Probably catalyzes the reduction of dTDP-4-keto-2,6-dideoxy-beta-L-galactose to yield dTDP-L-olivose. In Streptomyces antibioticus, this protein is Probable dTDP-4,6-dihydroxy-2-methyloxan-3-one 4-ketoreductase.